Reading from the N-terminus, the 497-residue chain is GDP-fucose protein O-fucosyltransferase 4 (497 aa).

Residues 1 to 6 (MACRRR) are Cytoplasmic-facing. A helical; Signal-anchor for type II membrane protein transmembrane segment spans residues 7-27 (LLPCAGLGLFGVLCWVWVSFA). At 28–497 (SFPDDQLPLE…ITERRARGKH (470 aa)) the chain is on the lumenal side. Residue asparagine 169 is glycosylated (N-linked (GlcNAc...) asparagine). Cysteine 392 and cysteine 395 form a disulfide bridge. Residues 406–427 (RAHRKDPERNPPPLPKMASNSH) are disordered. The N-linked (GlcNAc...) asparagine glycan is linked to asparagine 474.

The protein belongs to the glycosyltransferase 10 family.

It is found in the endoplasmic reticulum membrane. The enzyme catalyses L-threonyl-[protein] + GDP-beta-L-fucose = 3-O-(alpha-L-fucosyl)-L-threonyl-[protein] + GDP + H(+). It carries out the reaction L-seryl-[protein] + GDP-beta-L-fucose = 3-O-(alpha-L-fucosyl)-L-seryl-[protein] + GDP + H(+). The protein operates within protein modification; protein glycosylation. Protein O-fucosyltransferase that specifically catalyzes O-fucosylation of serine or threonine residues in EMI domains of target proteins. Attaches fucose through an O-glycosidic linkage. O-fucosylation of EMI domain-containing proteins may be required for facilitating protein folding and secretion. The protein is GDP-fucose protein O-fucosyltransferase 4 (fut11) of Oryzias latipes (Japanese rice fish).